Reading from the N-terminus, the 601-residue chain is Putative helicase 7 (601 aa).

A Helicase ATP-binding domain is found at 17–182 (QSFLMSDKNL…IIDAEIIKTD (166 aa)). 30–37 (APTGTGKS) lines the ATP pocket. Residues 129–132 (DEIH) carry the DEAH box motif. A Helicase C-terminal domain is found at 208 to 375 (LKEDFIKKMV…VLEDFLLALI (168 aa)).

This chain is Putative helicase 7 (SIFV0007), found in Saccharolobus islandicus (Sulfolobus islandicus).